Reading from the N-terminus, the 167-residue chain is Transcription factor HES-5 (167 aa).

One can recognise a bHLH domain in the interval 16-72; sequence KNRLRKPVVEKMRRDRINSSIEQLKLLLEQEFARHQPNSKLEKADILEMAVSYLKHS. The region spanning 88-119 is the Orange domain; it reads YSEGYSWCLQEAVQFLTLHAASDTQMKLLYHF. A compositionally biased stretch (pro residues) spans 124–138; that stretch reads APAAPAKEPPAPGAA. The segment at 124–167 is disordered; sequence APAAPAKEPPAPGAAPQPARSSAKAAAAAVSTSRQPACGLWRPW. The span at 139–160 shows a compositional bias: low complexity; the sequence is PQPARSSAKAAAAAVSTSRQPA. A WRPW motif motif is present at residues 164 to 167; sequence WRPW.

Transcription repression requires formation of a complex with a corepressor protein of the Groucho/TLE family.

The protein localises to the nucleus. In terms of biological role, transcriptional repressor of genes that require a bHLH protein for their transcription. Plays an important role as neurogenesis negative regulator. The chain is Transcription factor HES-5 (Hes5) from Mus musculus (Mouse).